The following is a 105-amino-acid chain: Large ribosomal subunit protein uL24 (105 aa).

The tract at residues 1-25 (MHIKKGDNVKVIAGKDKGKEGKVVS) is disordered.

This sequence belongs to the universal ribosomal protein uL24 family. As to quaternary structure, part of the 50S ribosomal subunit.

One of two assembly initiator proteins, it binds directly to the 5'-end of the 23S rRNA, where it nucleates assembly of the 50S subunit. Its function is as follows. One of the proteins that surrounds the polypeptide exit tunnel on the outside of the subunit. The chain is Large ribosomal subunit protein uL24 from Staphylococcus saprophyticus subsp. saprophyticus (strain ATCC 15305 / DSM 20229 / NCIMB 8711 / NCTC 7292 / S-41).